Reading from the N-terminus, the 68-residue chain is Small ribosomal subunit protein bS21 (68 aa).

This sequence belongs to the bacterial ribosomal protein bS21 family.

The protein is Small ribosomal subunit protein bS21 of Dinoroseobacter shibae (strain DSM 16493 / NCIMB 14021 / DFL 12).